Consider the following 35-residue polypeptide: Photosystem II reaction center protein M (35 aa).

Met1 carries the post-translational modification N-formylmethionine. Residues 7 to 28 (GFIASILFVLVPTVFLLILFIQ) traverse the membrane as a helical segment.

Belongs to the PsbM family. As to quaternary structure, PSII is composed of 1 copy each of membrane proteins PsbA, PsbB, PsbC, PsbD, PsbE, PsbF, PsbH, PsbI, PsbJ, PsbK, PsbL, PsbM, PsbT, PsbX, PsbY, PsbZ, Psb30/Ycf12, peripheral proteins PsbO, CyanoQ (PsbQ), PsbU, PsbV and a large number of cofactors. It forms dimeric complexes.

The protein localises to the cellular thylakoid membrane. In terms of biological role, one of the components of the core complex of photosystem II (PSII). PSII is a light-driven water:plastoquinone oxidoreductase that uses light energy to abstract electrons from H(2)O, generating O(2) and a proton gradient subsequently used for ATP formation. It consists of a core antenna complex that captures photons, and an electron transfer chain that converts photonic excitation into a charge separation. This subunit is found at the monomer-monomer interface. Involved in assembly of monomeric PSII from the CP43-less intermediate. The protein is Photosystem II reaction center protein M of Synechocystis sp. (strain ATCC 27184 / PCC 6803 / Kazusa).